The chain runs to 112 residues: Histone H2B (112 aa).

The segment at 1 to 24 is disordered; sequence MATPKSSSANRKKGGKKSHRKPKR. The span at 10-24 shows a compositional bias: basic residues; the sequence is NRKKGGKKSHRKPKR.

It belongs to the histone H2B family. As to quaternary structure, the nucleosome is a histone octamer containing two molecules each of H2A, H2B, H3 and H4 assembled in one H3-H4 heterotetramer and two H2A-H2B heterodimers. The octamer wraps approximately 147 bp of DNA.

The protein resides in the nucleus. It is found in the chromosome. In terms of biological role, core component of nucleosome. Nucleosomes wrap and compact DNA into chromatin, limiting DNA accessibility to the cellular machineries which require DNA as a template. Histones thereby play a central role in transcription regulation, DNA repair, DNA replication and chromosomal stability. DNA accessibility is regulated via a complex set of post-translational modifications of histones, also called histone code, and nucleosome remodeling. This Trypanosoma cruzi protein is Histone H2B.